The primary structure comprises 397 residues: t-SNARE affecting a late Golgi compartment protein 2 (397 aa).

The Cytoplasmic portion of the chain corresponds to 1–317 (MFRDRTNLFL…HYQKRTQKCK (317 aa)). A coiled-coil region spans residues 74–96 (DIAQDVDDYLLEVRRLSEQLAKV). At Ser109 the chain carries Phosphoserine. Residues 244–306 (EAYLRERDEE…KSADKELNKA (63 aa)) form the t-SNARE coiled-coil homology domain. The chain crosses the membrane as a helical; Anchor for type IV membrane protein span at residues 318-338 (VILLLTLCVIALFFFVMLKPH). Residues 339 to 397 (GGGSGGRNNGSNKYNNDDNKTVNNSHDDGSNTHINDEESNLPSIVEVTESENDALDDLL) are Vesicular-facing. The segment at 341-397 (GSGGRNNGSNKYNNDDNKTVNNSHDDGSNTHINDEESNLPSIVEVTESENDALDDLL) is disordered. Basic and acidic residues predominate over residues 353-374 (NNDDNKTVNNSHDDGSNTHIND). Over residues 386–397 (TESENDALDDLL) the composition is skewed to acidic residues.

It belongs to the syntaxin family. In terms of assembly, interacts with VPS45.

It localises to the golgi apparatus. The protein resides in the trans-Golgi network membrane. Its subcellular location is the endosome membrane. In terms of biological role, t-SNARE that functions in transport from the endosome to the late Golgi and on the endocytic pathway. The polypeptide is t-SNARE affecting a late Golgi compartment protein 2 (TLG2) (Saccharomyces cerevisiae (strain ATCC 204508 / S288c) (Baker's yeast)).